The following is a 250-amino-acid chain: MALHLGVITLLPEIIQGIHYGVTGRAIEQGLVKIDCWNPRDWSSRPYKQVDDKPYGGGPGMVMMYEPLHAAIKHARSEMKENCKTIYLSPQGKVVRQNDLKQIAIQKQSLLFVAGRYEGIDERIINHHIDEEWSLGDFVLSGGELAAMVFIDAIIRLIPGSLGHLGSAEQDSFMNGLLDCPHYTRPATINGLDVPDVLLGGNHKEIERWRRKQSLGKTWLKRPDLLEKIQLSETDKQLLAEFKCEHGDSC.

S-adenosyl-L-methionine contacts are provided by residues Gly-115 and 135–140 (LGDFVL).

This sequence belongs to the RNA methyltransferase TrmD family. Homodimer.

The protein localises to the cytoplasm. The catalysed reaction is guanosine(37) in tRNA + S-adenosyl-L-methionine = N(1)-methylguanosine(37) in tRNA + S-adenosyl-L-homocysteine + H(+). In terms of biological role, specifically methylates guanosine-37 in various tRNAs. The sequence is that of tRNA (guanine-N(1)-)-methyltransferase from Legionella pneumophila (strain Paris).